Reading from the N-terminus, the 293-residue chain is Probable xyloglucan endotransglucosylase/hydrolase protein 7 (293 aa).

A signal peptide spans 1 to 29 (MVVSLFSSRNVFYTLSLCLFAALYQPVMS). One can recognise a GH16 domain in the interval 30 to 223 (RPAKFEDDFR…WSRAPFYAYY (194 aa)). Glu-109 (nucleophile) is an active-site residue. The active-site Proton donor is the Glu-113. A xyloglucan-binding site is contributed by Glu-113. N-linked (GlcNAc...) asparagine glycosylation is present at Asn-117. Residues 126–128 (QTN), 136–138 (DRE), 202–203 (DW), and Gly-207 contribute to the xyloglucan site. N-linked (GlcNAc...) asparagine glycosylation occurs at Asn-213. 2 cysteine pairs are disulfide-bonded: Cys-231–Cys-239 and Cys-276–Cys-289. Arg-281 lines the xyloglucan pocket.

This sequence belongs to the glycosyl hydrolase 16 family. XTH group 1 subfamily. Post-translationally, contains at least one intrachain disulfide bond essential for its enzymatic activity.

It localises to the secreted. Its subcellular location is the cell wall. The protein resides in the extracellular space. The protein localises to the apoplast. It catalyses the reaction breaks a beta-(1-&gt;4) bond in the backbone of a xyloglucan and transfers the xyloglucanyl segment on to O-4 of the non-reducing terminal glucose residue of an acceptor, which can be a xyloglucan or an oligosaccharide of xyloglucan.. Functionally, catalyzes xyloglucan endohydrolysis (XEH) and/or endotransglycosylation (XET). Cleaves and religates xyloglucan polymers, an essential constituent of the primary cell wall, and thereby participates in cell wall construction of growing tissues. The protein is Probable xyloglucan endotransglucosylase/hydrolase protein 7 (XTH7) of Arabidopsis thaliana (Mouse-ear cress).